Here is a 325-residue protein sequence, read N- to C-terminus: MGGWAIAVHGGAGIDPNLPAERQEEAKQLLTRCLNLGIIALRSNVSAIDVVELVIRELETDPLFNSGRGSALTEKGTVEMEASIMDGTKRRCGAVSGITTVKNPISLARLVMDKSPHSYLAFSGAEDFARKQGVEIVDNEYFVTDDNVGMLKLAKEANSILFDYRIPPMGCAGAAATDSPIQMNGLPISIYAPETVGCVVVDGKGHCAAGTSTGGLMNKMMGRIGDSPLIGAGTYASEFCGVSCTGEGEAIIRATLARDVSAVMEYKGLNLQEAVDYVIKHRLDEGFAGLIAVSNKGEVVCGFNSNGMFRGCATEDGFMEVAIWE.

Thr-195 (nucleophile) is an active-site residue. Substrate contacts are provided by residues 223-226 and 245-248; these read RIGD and TGEG.

Belongs to the Ntn-hydrolase family. In terms of assembly, heterotetramer of two alpha and two beta chains arranged as a dimer of alpha/beta heterodimers. Post-translationally, cleaved into an alpha and beta chain by autocatalysis; this activates the enzyme. The N-terminal residue of the beta subunit is responsible for the nucleophile hydrolase activity.

The catalysed reaction is Cleavage of a beta-linked Asp residue from the N-terminus of a polypeptide.. Functionally, acts in asparagine catabolism and also in the final steps of protein degradation via hydrolysis of a range of isoaspartyl dipeptides. This Arabidopsis thaliana (Mouse-ear cress) protein is Probable isoaspartyl peptidase/L-asparaginase 2.